An 81-amino-acid polypeptide reads, in one-letter code: Elongation factor 1-beta (81 aa).

Belongs to the EF-1-beta/EF-1-delta family.

In terms of biological role, promotes the exchange of GDP for GTP in EF-1-alpha/GDP, thus allowing the regeneration of EF-1-alpha/GTP that could then be used to form the ternary complex EF-1-alpha/GTP/AAtRNA. The protein is Elongation factor 1-beta of Nanoarchaeum equitans (strain Kin4-M).